Here is an 858-residue protein sequence, read N- to C-terminus: Neural cell adhesion molecule 1 (858 aa).

Residues 1-19 (MLRTKDLIWTLFFLGTAVS) form the signal peptide. Ig-like C2-type domains follow at residues 20–111 (LQVD…ATVN), 116–205 (QKLM…KDIQ), 212–302 (PTVQ…ASIH), 309–414 (PKIT…LEVQ), and 417–502 (PKLQ…ESLE). Residues 20 to 721 (LQVDIVPSQG…NGSPTAGLST (702 aa)) lie on the Extracellular side of the membrane. Disulfide bonds link Cys41–Cys96 and Cys139–Cys189. Residues 152–156 (KHKGR) and 161–165 (KKDVR) each bind heparin. Residue Asn222 is glycosylated (N-linked (GlcNAc...) asparagine). Cys235 and Cys288 are joined by a disulfide. N-linked (GlcNAc...) asparagine glycans are attached at residues Asn316, Asn348, Asn434, Asn460, and Asn489. Cys330 and Cys396 are oxidised to a cystine. Cys437 and Cys490 are disulfide-bonded. 2 consecutive Fibronectin type-III domains span residues 510–609 (TPSS…TQPV) and 611–706 (EPSA…SAQP). Residues 722-739 (GAIVGILIVIFVLLLVVM) form a helical membrane-spanning segment. The Cytoplasmic portion of the chain corresponds to 740–858 (DITCYFLNKC…TQTKENESKA (119 aa)). The disordered stretch occupies residues 765 to 858 (PGAKGKDMEE…TQTKENESKA (94 aa)). 2 stretches are compositionally biased toward basic and acidic residues: residues 768 to 809 (KGKD…HTEP) and 817 to 834 (EPEK…ESEA). 2 positions are modified to phosphoserine: Ser780 and Ser784.

In terms of assembly, interacts with MDK. Found in a complex with SLC39A6, SLC39A10 and with NCAM1; this complex controls NCAM1 phosphorylation and integration into focal adhesion complexes during epithelial-tomesenchymal transition. Interacts with synaptic plasticity regulator PANTS. Post-translationally, polysialylated by ST8SIA2 and ST8SIA4. Polysialylation modulates cell interactions by confering both attractive and repulsive properties that are highly regulated by ST8SIA2 and ST8SIA4. Polysialylation is formed on a-2,3-linked sialic acid of core glycans.

The protein resides in the cell membrane. In terms of biological role, this protein is a cell adhesion molecule involved in neuron-neuron adhesion, neurite fasciculation, outgrowth of neurites, etc. The polypeptide is Neural cell adhesion molecule 1 (Rattus norvegicus (Rat)).